Reading from the N-terminus, the 774-residue chain is Cleavage and polyadenylation specificity factor subunit 3 (774 aa).

The segment covering 1 to 26 (MHHNNHHHGHHGRYQHHHNQHLKRPL) has biased composition (basic residues). The tract at residues 1 to 30 (MHHNNHHHGHHGRYQHHHNQHLKRPLKGGT) is disordered. Zn(2+)-binding residues include His97, His99, Asp101, His102, His185, and Asp206. His423 serves as the catalytic Proton donor. His445 provides a ligand contact to Zn(2+). The interval 636–665 (KEEITKDDIEKEKEKEKEQQDGDDDDDDEI) is disordered. Basic and acidic residues predominate over residues 638–655 (EITKDDIEKEKEKEKEQQ).

The protein belongs to the metallo-beta-lactamase superfamily. RNA-metabolizing metallo-beta-lactamase-like family. CPSF3 subfamily. In terms of assembly, component of the cleavage and polyadenylation specificity factor (CPSF) complex. Zn(2+) serves as cofactor.

It is found in the nucleus. In terms of biological role, component of the cleavage and polyadenylation specificity factor (CPSF) complex that play a key role in pre-mRNA 3'-end formation, recognizing the AAUAAA signal sequence and interacting with poly(A) polymerase and other factors to bring about cleavage and poly(A) addition. Has endonuclease activity, and functions as an mRNA 3'-end-processing endonuclease. The polypeptide is Cleavage and polyadenylation specificity factor subunit 3 (cpsf3) (Dictyostelium discoideum (Social amoeba)).